Reading from the N-terminus, the 476-residue chain is Cysteine--tRNA ligase (476 aa).

Cys-31 serves as a coordination point for Zn(2+). The short motif at 33–43 (PTVYNYAHIGN) is the 'HIGH' region element. Residues Cys-211, His-236, and Glu-240 each coordinate Zn(2+). A 'KMSKS' region motif is present at residues 269–273 (KMSKS). An ATP-binding site is contributed by Lys-272.

Belongs to the class-I aminoacyl-tRNA synthetase family. In terms of assembly, monomer. Requires Zn(2+) as cofactor.

The protein resides in the cytoplasm. It catalyses the reaction tRNA(Cys) + L-cysteine + ATP = L-cysteinyl-tRNA(Cys) + AMP + diphosphate. The chain is Cysteine--tRNA ligase from Xanthomonas axonopodis pv. citri (strain 306).